A 354-amino-acid polypeptide reads, in one-letter code: Uptake hydrogenase small subunit (354 aa).

Residues 1–44 (MSQLETXYDVMRRQGITRRSFLKYCSLTGRPCLGPTFAPQIAHA) constitute a signal peptide (tat-type signal). [4Fe-4S] cluster contacts are provided by Cys61, Cys64, Cys156, Cys190, His228, Ser231, Cys256, and Cys262. [3Fe-4S] cluster-binding residues include Cys271, Cys290, and Cys293.

Belongs to the [NiFe]/[NiFeSe] hydrogenase small subunit family. Heterodimer of a large and a small subunit. [4Fe-4S] cluster is required as a cofactor. It depends on [3Fe-4S] cluster as a cofactor. Predicted to be exported by the Tat system. The position of the signal peptide cleavage has not been experimentally proven.

The protein resides in the cell membrane. The enzyme catalyses H2 + A = AH2. In terms of biological role, this enzyme recycles the H(2) produced by nitrogenase to increase the production of ATP and to protect nitrogenase against inhibition or damage by O(2) under carbon- or phosphate-limited conditions. This is Uptake hydrogenase small subunit (hupA) from Azotobacter chroococcum mcd 1.